The following is a 105-amino-acid chain: Nucleoid-associated protein OCAR_7544/OCA5_c05960 (105 aa).

Belongs to the YbaB/EbfC family. Homodimer.

It is found in the cytoplasm. Its subcellular location is the nucleoid. Its function is as follows. Binds to DNA and alters its conformation. May be involved in regulation of gene expression, nucleoid organization and DNA protection. The chain is Nucleoid-associated protein OCAR_7544/OCA5_c05960 from Afipia carboxidovorans (strain ATCC 49405 / DSM 1227 / KCTC 32145 / OM5) (Oligotropha carboxidovorans).